The following is a 265-amino-acid chain: tRNA pseudouridine synthase A (265 aa).

Asp-53 functions as the Nucleophile in the catalytic mechanism. Substrate is bound at residue Tyr-111.

The protein belongs to the tRNA pseudouridine synthase TruA family. In terms of assembly, homodimer.

The enzyme catalyses uridine(38/39/40) in tRNA = pseudouridine(38/39/40) in tRNA. Formation of pseudouridine at positions 38, 39 and 40 in the anticodon stem and loop of transfer RNAs. The chain is tRNA pseudouridine synthase A from Acinetobacter baumannii (strain AB307-0294).